Reading from the N-terminus, the 299-residue chain is Ethylmalonyl-CoA decarboxylase (299 aa).

The protein belongs to the enoyl-CoA hydratase/isomerase family.

It localises to the cytoplasm. Its subcellular location is the cytosol. It carries out the reaction (2S)-ethylmalonyl-CoA + H(+) = butanoyl-CoA + CO2. The enzyme catalyses (S)-methylmalonyl-CoA + H(+) = propanoyl-CoA + CO2. The catalysed reaction is (2R)-ethylmalonyl-CoA + H(+) = butanoyl-CoA + CO2. Decarboxylates ethylmalonyl-CoA, a potentially toxic metabolite, to form butyryl-CoA, suggesting it might be involved in metabolite proofreading. Acts preferentially on (S)-ethylmalonyl-CoA but also has some activity on the (R)-isomer. Also has methylmalonyl-CoA decarboxylase activity at lower level. The protein is Ethylmalonyl-CoA decarboxylase (echdc1) of Xenopus tropicalis (Western clawed frog).